The following is a 542-amino-acid chain: Putative cysteine ligase BshC (542 aa).

Residues 458–487 are a coiled coil; it reads VAKNAAILQAQIEFLQHALERALLRKHETE.

This sequence belongs to the BshC family.

Functionally, involved in bacillithiol (BSH) biosynthesis. May catalyze the last step of the pathway, the addition of cysteine to glucosamine malate (GlcN-Mal) to generate BSH. This Geobacillus kaustophilus (strain HTA426) protein is Putative cysteine ligase BshC.